A 91-amino-acid polypeptide reads, in one-letter code: Small ribosomal subunit protein uS19 (91 aa).

This sequence belongs to the universal ribosomal protein uS19 family.

Functionally, protein S19 forms a complex with S13 that binds strongly to the 16S ribosomal RNA. In Delftia acidovorans (strain DSM 14801 / SPH-1), this protein is Small ribosomal subunit protein uS19.